The chain runs to 306 residues: UDP-3-O-acyl-N-acetylglucosamine deacetylase (306 aa).

Positions 79, 238, and 242 each coordinate Zn(2+). His-265 serves as the catalytic Proton donor.

It belongs to the LpxC family. Zn(2+) serves as cofactor.

It carries out the reaction a UDP-3-O-[(3R)-3-hydroxyacyl]-N-acetyl-alpha-D-glucosamine + H2O = a UDP-3-O-[(3R)-3-hydroxyacyl]-alpha-D-glucosamine + acetate. Its pathway is glycolipid biosynthesis; lipid IV(A) biosynthesis; lipid IV(A) from (3R)-3-hydroxytetradecanoyl-[acyl-carrier-protein] and UDP-N-acetyl-alpha-D-glucosamine: step 2/6. Functionally, catalyzes the hydrolysis of UDP-3-O-myristoyl-N-acetylglucosamine to form UDP-3-O-myristoylglucosamine and acetate, the committed step in lipid A biosynthesis. This chain is UDP-3-O-acyl-N-acetylglucosamine deacetylase, found in Shewanella sediminis (strain HAW-EB3).